A 758-amino-acid polypeptide reads, in one-letter code: G-protein alpha subunit activating protein gbas-1 (758 aa).

Acidic residues predominate over residues 30–48; the sequence is LDEVDNADFEREDDEEEVL. The disordered stretch occupies residues 30-70; sequence LDEVDNADFEREDDEEEVLSEPSESPYTSTPKSSKRVNKTR. Positions 49–61 are enriched in low complexity; it reads SEPSESPYTSTPK. Positions 653 to 666 match the GBA motif; that stretch reads ETVTVEEFLMNSYS. Residues 668 to 690 are disordered; sequence AAPSTSTAPAPPKAPVTAPPAPQ. Residues 676-689 are compositionally biased toward pro residues; it reads PAPPKAPVTAPPAP.

As to quaternary structure, interacts (via GBA motif) with guanine nucleotide-binding protein G(o) subunit alpha goa-1 (in GDP-bound form); the interaction leads to activation of goa-1. Expressed in some neurons including the head and tail neurons, HSN and VC, in a subset of glial cells, in the distal tips cells and in the intestine.

Acts as a non-receptor guanine nucleotide exchange factor which binds to and activates G-protein alpha subunit goa-1. The polypeptide is G-protein alpha subunit activating protein gbas-1 (Caenorhabditis elegans).